We begin with the raw amino-acid sequence, 200 residues long: ATP-dependent Clp protease proteolytic subunit 3 (200 aa).

Serine 101 functions as the Nucleophile in the catalytic mechanism. Histidine 126 is an active-site residue.

This sequence belongs to the peptidase S14 family. Fourteen ClpP subunits assemble into 2 heptameric rings which stack back to back to give a disk-like structure with a central cavity, resembling the structure of eukaryotic proteasomes.

Its subcellular location is the cytoplasm. It catalyses the reaction Hydrolysis of proteins to small peptides in the presence of ATP and magnesium. alpha-casein is the usual test substrate. In the absence of ATP, only oligopeptides shorter than five residues are hydrolyzed (such as succinyl-Leu-Tyr-|-NHMec, and Leu-Tyr-Leu-|-Tyr-Trp, in which cleavage of the -Tyr-|-Leu- and -Tyr-|-Trp bonds also occurs).. Its function is as follows. Cleaves peptides in various proteins in a process that requires ATP hydrolysis. Has a chymotrypsin-like activity. Plays a major role in the degradation of misfolded proteins. The chain is ATP-dependent Clp protease proteolytic subunit 3 from Synechococcus sp. (strain CC9902).